Reading from the N-terminus, the 616-residue chain is Chaperone protein HscA (616 aa).

This sequence belongs to the heat shock protein 70 family.

In terms of biological role, chaperone involved in the maturation of iron-sulfur cluster-containing proteins. Has a low intrinsic ATPase activity which is markedly stimulated by HscB. Involved in the maturation of IscU. The sequence is that of Chaperone protein HscA from Klebsiella pneumoniae (strain 342).